Here is a 163-residue protein sequence, read N- to C-terminus: MADSSFDVVSKVERQEVDNALHQAGKELSTRFDFRNTGASIEWSGEETITLTADTEERLLAALDVFKEKLIRRDISLKAFDAGEPAQSGKTYKLSGSLVQGITTENAKKITKKIRDEGPKGVKAQIQGDELRVSSKKRDDLQAVISLLKGEDFGIALQFVNYR.

This sequence belongs to the YajQ family.

Its function is as follows. Nucleotide-binding protein. The sequence is that of Nucleotide-binding protein ROP_16630 from Rhodococcus opacus (strain B4).